We begin with the raw amino-acid sequence, 355 residues long: Blue-sensitive opsin P467 (355 aa).

Topologically, residues 1 to 36 (MNGTEGINFYVPLSNKTGLVRSPFEYPQYYLADPWK) are extracellular. Asparagine 2 and asparagine 15 each carry an N-linked (GlcNAc...) asparagine glycan. A helical transmembrane segment spans residues 37-61 (FKVLSFYMFFLIAAGMPLNGLTLFV). Residues 62-73 (TFQHKKLRQPLN) lie on the Cytoplasmic side of the membrane. Residues 74–98 (YILVNLAAANLVTVCCGFTVTFYAS) traverse the membrane as a helical segment. The Extracellular segment spans residues 99 to 113 (WYAYFVFGPIGCAIE). A disulfide bond links cysteine 110 and cysteine 187. Residues 114–133 (GFFATIGGQVALWSLVVLAI) traverse the membrane as a helical segment. Residues 134 to 152 (ERYIVICKPMGNFRFSATH) lie on the Cytoplasmic side of the membrane. The helical transmembrane segment at 153-176 (AIMGIAFTWFMALACAGPPLFGWS) threads the bilayer. The Extracellular portion of the chain corresponds to 177–202 (RFIPEGMQCSCGPDYYTLNPDFHNES). Asparagine 200 is a glycosylation site (N-linked (GlcNAc...) asparagine). Residues 203 to 230 (YVIYMFIVHFTVPMVVIFFSYGRLVCKV) traverse the membrane as a helical segment. The Cytoplasmic portion of the chain corresponds to 231-252 (REAAAQQQESATTQKAEKEVTR). A helical membrane pass occupies residues 253–276 (MVILMVLGFLLAWTPYAATAIWIF). Topologically, residues 277–284 (TNRGAAFS) are extracellular. The chain crosses the membrane as a helical span at residues 285-309 (VTFMTIPAFFSKSSSIYNPIIYVLL). Lysine 296 carries the N6-(retinylidene)lysine modification. Topologically, residues 310–355 (NKQFRNCMVTTICCGKNPFGDEDVSSSVSQSKTEVSSVSSSQVAPA) are cytoplasmic. The segment at 333–355 (VSSSVSQSKTEVSSVSSSQVAPA) is disordered. A compositionally biased stretch (low complexity) spans 334 to 355 (SSSVSQSKTEVSSVSSSQVAPA).

It belongs to the G-protein coupled receptor 1 family. Opsin subfamily. Post-translationally, phosphorylated on some or all of the serine and threonine residues present in the C-terminal region. As to expression, in this lizard the color pigments are found in the rod-shaped photoreceptor cells which have been derived from ancestral cone-like photoreceptors.

The protein resides in the membrane. Visual pigments are the light-absorbing molecules that mediate vision. They consist of an apoprotein, opsin, covalently linked to cis-retinal. This is Blue-sensitive opsin P467 from Gekko gecko (Tokay gecko).